The following is a 421-amino-acid chain: Ethanolamine-phosphate cytidylyltransferase (421 aa).

Residues 8-28 (IVGSCIVGGAAFAVGASFLHL) traverse the membrane as a helical segment. The tract at residues 203-227 (SRSSLQRQFSHGHSSPKFEDGASSA) is disordered. Polar residues predominate over residues 204 to 215 (RSSLQRQFSHGH). CTP contacts are provided by residues 262 to 263 (AF), 270 to 273 (HVEI), arginine 298, 346 to 349 (HGTV), and 377 to 381 (SPLDI). The disordered stretch occupies residues 402-421 (AKKEASEKKYYEQKSFVSGD). A compositionally biased stretch (basic and acidic residues) spans 403–413 (KKEASEKKYYE). Serine 416 carries the post-translational modification Phosphoserine.

This sequence belongs to the cytidylyltransferase family. Expressed in root tip, lateral root primordia, leaves, shoot apex, stem vascular bundles, pollen and embryos.

The protein localises to the mitochondrion outer membrane. The enzyme catalyses phosphoethanolamine + CTP + H(+) = CDP-ethanolamine + diphosphate. It participates in phospholipid metabolism; phosphatidylethanolamine biosynthesis; phosphatidylethanolamine from ethanolamine: step 2/3. Its function is as follows. Plays an important role in the biosynthesis of the phospholipid phosphatidylethanolamine. Catalyzes the formation of CDP-ethanolamine. Essential for early embryonic development. This Arabidopsis thaliana (Mouse-ear cress) protein is Ethanolamine-phosphate cytidylyltransferase.